A 302-amino-acid chain; its full sequence is MDSSGGAYLNVDAIWSKVGFVRLLQMLFGCTTFSLVLHRAGFSAAYGTFCVFVWAFCFALTILIVTCELTRLQSCLRSISWGNFTAAYAMLATLMTLTAAVIYPMYFTSLNCSSSDCSTKYFRLAVSVCAALLFVTYAVEVFLTRAKPGQPCSYMATASGLLKVVQAFVACVIFGALASESQYKKFVATQWCVAVYSFCFGVTMVVVILNITGRALSLCCPFERFVVIYTVLAILMYISAAVIWPVYFFDSKYGSAKRPSRCTWGQCPWDSQLAVTIFTHINLILYIADLIYTQRLRIVAQR.

MARVEL domains follow at residues 13–149 (AIWS…AKPG) and 154–298 (YMAT…RLRI). 7 helical membrane-spanning segments follow: residues 45–65 (AYGTFCVFVWAFCFALTILIV), 87–107 (AYAMLATLMTLTAAVIYPMYF), 124–144 (LAVSVCAALLFVTYAVEVFLT), 158–178 (ASGLLKVVQAFVACVIFGALA), 191–211 (WCVAVYSFCFGVTMVVVILNI), 225–245 (FVVIYTVLAILMYISAAVIWP), and 273–293 (LAVTIFTHINLILYIADLIYT).

This sequence belongs to the MAL family.

Its subcellular location is the membrane. This is Myeloid-associated differentiation marker-like protein 2 (myadml2) from Xenopus laevis (African clawed frog).